A 296-amino-acid chain; its full sequence is Putative ankyrin repeat protein FPV216 (296 aa).

ANK repeat units lie at residues serine 73–threonine 102 and leucine 107–isoleucine 136.

In Fowlpox virus (strain NVSL) (FPV), this protein is Putative ankyrin repeat protein FPV216.